A 527-amino-acid chain; its full sequence is T-complex protein 1 subunit delta (527 aa).

Belongs to the TCP-1 chaperonin family. Heterooligomeric complex of about 850 to 900 kDa that forms two stacked rings, 12 to 16 nm in diameter.

The protein resides in the cytoplasm. In terms of biological role, molecular chaperone; assists the folding of proteins upon ATP hydrolysis. Known to play a role, in vitro, in the folding of actin and tubulin. In Schizosaccharomyces pombe (strain 972 / ATCC 24843) (Fission yeast), this protein is T-complex protein 1 subunit delta (cct4).